Consider the following 210-residue polypeptide: N-(5'-phosphoribosyl)anthranilate isomerase (210 aa).

Belongs to the TrpF family.

It catalyses the reaction N-(5-phospho-beta-D-ribosyl)anthranilate = 1-(2-carboxyphenylamino)-1-deoxy-D-ribulose 5-phosphate. It functions in the pathway amino-acid biosynthesis; L-tryptophan biosynthesis; L-tryptophan from chorismate: step 3/5. The polypeptide is N-(5'-phosphoribosyl)anthranilate isomerase (Crocosphaera subtropica (strain ATCC 51142 / BH68) (Cyanothece sp. (strain ATCC 51142))).